We begin with the raw amino-acid sequence, 305 residues long: NDP-polyphosphate phosphotransferase 1 (305 aa).

The protein belongs to the polyphosphate kinase 2 (PPK2) family. Class I subfamily.

The enzyme catalyses [phosphate](n) + ATP = [phosphate](n+1) + ADP. It catalyses the reaction [phosphate](n) + CTP = [phosphate](n+1) + CDP. The catalysed reaction is [phosphate](n) + GTP = [phosphate](n+1) + GDP. It carries out the reaction [phosphate](n) + UTP = [phosphate](n+1) + UDP. With respect to regulation, shows little dependence on metals. Uses inorganic polyphosphate (polyP) as a donor to convert NDP to NTP. PolyP hydrolysis is slightly faster with GDP, but it can also use ADP, CDP and UDP. The chain is NDP-polyphosphate phosphotransferase 1 from Ruegeria pomeroyi (strain ATCC 700808 / DSM 15171 / DSS-3) (Silicibacter pomeroyi).